The following is a 71-amino-acid chain: Large ribosomal subunit protein bL31 (71 aa).

4 residues coordinate Zn(2+): cysteine 16, cysteine 18, cysteine 36, and cysteine 39.

This sequence belongs to the bacterial ribosomal protein bL31 family. Type A subfamily. In terms of assembly, part of the 50S ribosomal subunit. The cofactor is Zn(2+).

Binds the 23S rRNA. The protein is Large ribosomal subunit protein bL31 of Thermotoga sp. (strain RQ2).